A 165-amino-acid chain; its full sequence is MKQKSILFPCLLLAASVYAWLESGQAELFSGQDQWPVLLMLLGAAFVYQGKKEAVTPHFFIGLLLFGIGLHFFAKPKWVWWPDDFEMLLFMIGFSLLVSTVQKKEYVYEAVSMICFSLFLYFFKQIMAWLESAHIPTALLKEYWPFVFIGISLLLLLIKRKKSIR.

6 helical membrane-spanning segments follow: residues 6-26 (ILFP…SGQA), 28-48 (LFSG…AFVY), 54-74 (AVTP…HFFA), 78-98 (WVWW…SLLV), 110-130 (AVSM…MAWL), and 138-158 (ALLK…LLLI).

Its subcellular location is the cell membrane. This is an uncharacterized protein from Bacillus subtilis (strain 168).